Consider the following 213-residue polypeptide: CDP-diacylglycerol--inositol 3-phosphatidyltransferase (213 aa).

The Cytoplasmic segment spans residues 1 to 5 (MPEEN). Residues 6-26 (IFLFVPNLIGYARIVFAIISF) traverse the membrane as a helical segment. Tyr-27 is a topological domain (lumenal). The helical transmembrane segment at 28-48 (FMPCCPFTASSFYLLSGLLDA) threads the bilayer. Mg(2+) is bound by residues Asp-47 and Asp-50. Topologically, residues 49-73 (FDGHAARALNQGTRFGAMLDMLTDR) are cytoplasmic. Residues Gly-51, Arg-55, and Thr-61 each contribute to the a CDP-1,2-diacyl-sn-glycerol site. Residues Asp-68 and Asp-72 each coordinate Mg(2+). Asp-72 (proton acceptor) is an active-site residue. Residues 74 to 94 (CATMCLLVNLALLYPRATLLF) form a helical membrane-spanning segment. A topological domain (lumenal) is located at residue Gln-95. The chain crosses the membrane as a helical span at residues 96–116 (LSMSLDVASHWLHLHSSVVRG). Over 117–139 (SESHKMIDLSGNPVLRIYYTSRP) the chain is Cytoplasmic. Residues 140 to 160 (ALFTLCAGNELFYCLLYLFNF) traverse the membrane as a helical segment. Residues 161–174 (SEGPLVGSVGLFRM) are Lumenal-facing. A helical membrane pass occupies residues 175-195 (GLWVTAPIALLKSVISVIHLI). Residues 196-213 (TAARNMAALDAADRAKKK) lie on the Cytoplasmic side of the membrane.

The protein belongs to the CDP-alcohol phosphatidyltransferase class-I family. Mn(2+) is required as a cofactor. Requires Mg(2+) as cofactor.

The protein resides in the endoplasmic reticulum membrane. It is found in the cell membrane. It carries out the reaction a CDP-1,2-diacyl-sn-glycerol + myo-inositol = a 1,2-diacyl-sn-glycero-3-phospho-(1D-myo-inositol) + CMP + H(+). Its function is as follows. Catalyzes the biosynthesis of phosphatidylinositol (PtdIns) as well as PtdIns:inositol exchange reaction. May thus act to reduce an excessive cellular PtdIns content. The exchange activity is due to the reverse reaction of PtdIns synthase and is dependent on CMP, which is tightly bound to the enzyme. The polypeptide is CDP-diacylglycerol--inositol 3-phosphatidyltransferase (Mus musculus (Mouse)).